Reading from the N-terminus, the 234-residue chain is Carboxy-S-adenosyl-L-methionine synthase (234 aa).

S-adenosyl-L-methionine-binding positions include Tyr-35, Gly-60–Ser-62, Asp-109–Ile-110, Asn-124, and Arg-191.

The protein belongs to the class I-like SAM-binding methyltransferase superfamily. Cx-SAM synthase family. As to quaternary structure, homodimer.

It carries out the reaction prephenate + S-adenosyl-L-methionine = carboxy-S-adenosyl-L-methionine + 3-phenylpyruvate + H2O. Its function is as follows. Catalyzes the conversion of S-adenosyl-L-methionine (SAM) to carboxy-S-adenosyl-L-methionine (Cx-SAM). The sequence is that of Carboxy-S-adenosyl-L-methionine synthase from Campylobacter fetus subsp. fetus (strain 82-40).